We begin with the raw amino-acid sequence, 140 residues long: Large-conductance mechanosensitive channel (140 aa).

2 helical membrane-spanning segments follow: residues 16–36 and 86–106; these read VVDLAVGVIIGAAFGKIVDSI and GSFLTIVLNFLILAFIIFLMV.

It belongs to the MscL family. Homopentamer.

Its subcellular location is the cell inner membrane. In terms of biological role, channel that opens in response to stretch forces in the membrane lipid bilayer. May participate in the regulation of osmotic pressure changes within the cell. The polypeptide is Large-conductance mechanosensitive channel (Anaeromyxobacter sp. (strain K)).